Consider the following 664-residue polypeptide: Translation factor GUF1, mitochondrial (664 aa).

One can recognise a tr-type G domain in the interval 63-246 (SNYRNFSIVA…SIINNIPPPQ (184 aa)). GTP is bound by residues 72–79 (AHVDHGKS), 139–143 (DTPGH), and 193–196 (NKID).

This sequence belongs to the TRAFAC class translation factor GTPase superfamily. Classic translation factor GTPase family. LepA subfamily.

It localises to the mitochondrion inner membrane. It catalyses the reaction GTP + H2O = GDP + phosphate + H(+). Functionally, promotes mitochondrial protein synthesis. May act as a fidelity factor of the translation reaction, by catalyzing a one-codon backward translocation of tRNAs on improperly translocated ribosomes. Binds to mitochondrial ribosomes in a GTP-dependent manner. This Clavispora lusitaniae (strain ATCC 42720) (Yeast) protein is Translation factor GUF1, mitochondrial.